The following is a 332-amino-acid chain: Alpha-N-acetylgalactosaminide alpha-2,6-sialyltransferase 6 (332 aa).

Residues 1–26 (MACPRPLSQCDHTPLPGPPAGHWPLP) form a disordered region. The Cytoplasmic portion of the chain corresponds to 1-42 (MACPRPLSQCDHTPLPGPPAGHWPLPLSRRRREMKSNKEQRS). A helical; Signal-anchor for type II membrane protein membrane pass occupies residues 43–63 (AVFVILFALITILILYSSSSA). At 64 to 332 (NEVFHYGSLR…GITFSHPSWT (269 aa)) the chain is on the lumenal side. N-linked (GlcNAc...) asparagine glycosylation is present at N97. C107 and C255 are oxidised to a cystine.

The protein belongs to the glycosyltransferase 29 family.

It localises to the golgi apparatus membrane. The catalysed reaction is a ganglioside GM1b (d18:1(4E)) + CMP-N-acetyl-beta-neuraminate = a ganglioside GD1alpha (d18:1(4E)) + CMP + H(+). It carries out the reaction N-acetyl-alpha-neuraminosyl-(2-&gt;3)-beta-D-galactosyl-(1-&gt;3)-N-acetyl-beta-D-glucosaminyl-(1-&gt;3)-beta-D-galactosyl-(1-&gt;4)-beta-D-glucosyl-(1&lt;-&gt;1')-N-acyl-sphing-4-enine + CMP-N-acetyl-beta-neuraminate = N-acetyl-alpha-neuraminosyl-(2-&gt;3)-beta-D-galactosyl-(1-&gt;3)-[N-acetyl-alpha-neuraminosyl-(2-&gt;6)]-N-acetyl-beta-D-glucosaminyl-(1-&gt;3)-beta-D-galactosyl-(1-&gt;4)-beta-D-glucosyl-(1&lt;-&gt;1')-N-acyl-sphing-4-enine + CMP + H(+). It catalyses the reaction a globoside MSGG + CMP-N-acetyl-beta-neuraminate = a globoside DSGG + CMP + H(+). The enzyme catalyses a ganglioside GD1a (d18:1(4E)) + CMP-N-acetyl-beta-neuraminate = a ganglioside GT1aalpha (d18:1(4E)) + CMP + H(+). The catalysed reaction is a ganglioside GT1b (d18:1(4E)) + CMP-N-acetyl-beta-neuraminate = a ganglioside GQ1balpha (d18:1(4E)) + CMP + H(+). It carries out the reaction 3-O-[alpha-Neu5Ac-(2-&gt;3)-beta-D-Gal-(1-&gt;3)-alpha-D-GalNAc]-L-Ser-[protein] + CMP-N-acetyl-beta-neuraminate = a 3-O-{alpha-Neu5Ac-(2-&gt;3)-beta-D-Gal-(1-&gt;3)-[alpha-Neu5Ac-(2-&gt;6)]-alpha-D-GalNAc}-L-seryl-[protein] + CMP + H(+). It catalyses the reaction 3-O-[alpha-Neu5Ac-(2-&gt;3)-beta-D-Gal-(1-&gt;3)-alpha-D-GalNAc]-L-Thr-[protein] + CMP-N-acetyl-beta-neuraminate = a 3-O-{alpha-Neu5Ac-(2-&gt;3)-beta-D-Gal-(1-&gt;3)-[alpha-Neu5Ac-(2-&gt;6)]-alpha-D-GalNAc}-L-threonyl-[protein] + CMP + H(+). Transfers the sialyl group (N-acetyl-alpha-neuraminyl or NeuAc) from CMP-NeuAc onto glycoproteins and glycolipids, forming an alpha-2,6-linkage. Produces branched type disialyl structures by transfer of a sialyl group onto the GalNAc or GlcNAc residue inside backbone core chains having a terminal sialic acid with an alpha-2,3-linkage on Gal. ST6GalNAcVI prefers glycolipids to glycoproteins, predominantly catalyzing the biosynthesis of ganglioside GD1alpha from GM1b. Besides GMb1, MSGG and other glycolipids, it shows activity towards sialyl Lc4Cer generating disialyl Lc4Cer, which can lead to the synthesis of disialyl Lewis a (Le(a)), suggested to be a cancer-associated antigen. Also has activity toward GD1a and GT1b, and can generate DSGG (disialylgalactosylgloboside) from MSGG (monosialylgalactosylgloboside). This Bos taurus (Bovine) protein is Alpha-N-acetylgalactosaminide alpha-2,6-sialyltransferase 6 (ST6GALNAC6).